A 405-amino-acid polypeptide reads, in one-letter code: 5-azacytidine-induced protein 2 (405 aa).

Residues 1–198 form a homodimerization region; that stretch reads MDTLVEDDIC…TELQKARQTG (198 aa). A coiled-coil region spans residues 40–197; the sequence is ALVTAYEDIK…RTELQKARQT (158 aa). The tract at residues 229 to 270 is interaction with TBK1 and IKBKE; sequence SDNMQHAYWELKREMSNLHLVTQVQAELLRKLKTSAAVKKAC. Residues serine 331 and serine 366 each carry the phosphoserine modification. A disordered region spans residues 357–377; sequence LEDNSWVFPSPPKSSETAFGE.

In terms of assembly, homodimer. Interacts with IKBKE and TBK1. Interacts with TICAM1. Interacts with TAX1BP1. Interacts with CALCOCO2. Post-translationally, ubiquitinated via 'Lys-48'-linked polyubiquitination by TRIM38, leading to its degradation. Testis, ovary, heart, lung, kidney and brain. Expressed mainly in the spermatocytes or spermatids in the testis.

It localises to the cytoplasm. Functionally, adapter protein which binds TBK1 and IKBKE playing a role in antiviral innate immunity. Activates serine/threonine-protein kinase TBK1 and facilitates its oligomerization. Enhances the phosphorylation of NF-kappa-B p65 subunit RELA by TBK1. Promotes TBK1-induced as well as TNF-alpha or PMA-induced activation of NF-kappa-B. Participates in IFNB promoter activation via TICAM1. This Mus musculus (Mouse) protein is 5-azacytidine-induced protein 2 (Azi2).